An 81-amino-acid polypeptide reads, in one-letter code: MKQNIHPNYQPVVFMDTTTGYKFLTGSTKGSKETVEWEDGNTYPLIRVEISSDSHPFYTGRQKFQAADGRIARFEKKYGKQ.

It belongs to the bacterial ribosomal protein bL31 family. Type B subfamily. Part of the 50S ribosomal subunit.

The protein is Large ribosomal subunit protein bL31B of Lactococcus lactis subsp. cremoris (strain MG1363).